We begin with the raw amino-acid sequence, 72 residues long: Late effector protein 1 (72 aa).

The N-terminal stretch at 1–22 (MKCYLVVVVAALCTLVAQGSVG) is a signal peptide. N-linked (GlcNAc...) asparagine glycosylation occurs at Asn66.

The protein belongs to the lep1 family. Interacts at the cell wall with secreted rep1 repellent peptides.

It localises to the secreted. It is found in the cell wall. Its function is as follows. Core effector contributing to spore formation and tumor formation at the host plant. Modulates surface hydrophobicity promoting cell-cell or cell-surface contacts. Lep1 and rep1 interact in aerial hyphae to form a strong hydrophobic layer. Plays a crucial role in hyphal aggregation that might be a prerequisite for strong proliferation of diploid cells and for induction of the morphological changes associated with spore formation. This is Late effector protein 1 from Sporisorium reilianum (strain SRZ2) (Maize head smut fungus).